A 663-amino-acid polypeptide reads, in one-letter code: Meiotically up-regulated gene 60 protein (663 aa).

The 67-residue stretch at 578–644 (PAEMHFYVPE…SENLWAVRSL (67 aa)) folds into the KH domain.

The protein resides in the cytoplasm. The protein localises to the nucleus. Its subcellular location is the cytoskeleton. It localises to the microtubule organizing center. It is found in the spindle pole body. In terms of biological role, has a role in meiosis. The chain is Meiotically up-regulated gene 60 protein (mug60) from Schizosaccharomyces pombe (strain 972 / ATCC 24843) (Fission yeast).